A 569-amino-acid polypeptide reads, in one-letter code: Endonuclease/exonuclease/phosphatase family domain-containing protein 1 (569 aa).

A lipid anchor (N-myristoyl glycine) is attached at glycine 2. Phosphoserine occurs at positions 16 and 25. A HhH domain is found at 38–67; it reads ERLNINTATEEELMTLPGVTRAVARSIVEY. Residues serine 106, serine 110, serine 160, and serine 173 each carry the phosphoserine modification. The tract at residues 200 to 224 is disordered; sequence SRPPSTHTNGGLTFTAKPHPSPTSL. Over residues 202-211 the composition is skewed to polar residues; sequence PPSTHTNGGL. Phosphothreonine is present on threonine 265. Residues 549–569 are disordered; it reads VPRNGNGVTLEPSEANIKHER.

In Mus musculus (Mouse), this protein is Endonuclease/exonuclease/phosphatase family domain-containing protein 1 (Eepd1).